The primary structure comprises 1183 residues: Protein deacetylase HDAC6 (1183 aa).

Residues 1–61 (MTSTGQDSST…KGKMKKLSQP (61 aa)) form a disordered region. The span at 18 to 29 (NPQSPLQDSSAT) shows a compositional bias: polar residues. At Ser21 the chain carries Phosphoserine. Arg32 carries the post-translational modification Omega-N-methylarginine. The Nuclear export signal motif lies at 66-75 (LIVGLQGLDL). Histone deacetylase regions lie at residues 86–434 (GLVF…TLLG) and 512–830 (GLVY…SLLG). His215 (1) is an active-site residue. The active-site 2 is the His641. The disordered stretch occupies residues 972–1042 (ATENSANQTT…EAQEVQESEE (71 aa)). The segment covering 980-996 (TTSGEEASGETESFGTS) has biased composition (low complexity). Phosphothreonine is present on residues Thr990, Thr995, and Thr1005. Residues 997 to 1008 (PSSNASKQTTGA) show a composition bias toward polar residues. Ser1009 is modified (phosphoserine). The span at 1021–1035 (ELGLSSTLELSSEAQ) shows a compositional bias: low complexity. The UBP-type zinc finger occupies 1079–1177 (SWCPHLMAVC…NAAHQNKFGE (99 aa)). Zn(2+) is bound by residues Cys1081, His1083, Cys1101, Cys1104, Cys1113, Cys1116, and Cys1121. Residues 1122–1124 (SRY) form a ubiquitin binding region. Residues His1128, His1132, His1138, Cys1151, and Cys1154 each contribute to the Zn(2+) site. The interval 1150–1157 (WCYLCQAY) is ubiquitin binding.

The protein belongs to the histone deacetylase family. HD type 2 subfamily. Forms a trimeric complex in the nucleus consisting of BANP, HDAC6 and KHDRBS1/SAM68; HDAC6 keeps KHDRBS1 in a deacetylated state which inhibits the inclusion of CD44 alternate exons. The complex is disrupted by MAPK1/MAPK3-mediated phosphorylation of BANP which results in BANP export to the cytoplasm. This facilitates acetylation of KHDRBS1 and CD44 variant exon inclusion. Interacts with SIRT2 (via both phosphorylated, unphosphorylated, active or inactive forms); the interaction is necessary for the complex to interact with alpha-tubulin. Under proteasome impairment conditions, interacts with UBD via its histone deacetylase 1 and UBP-type zinc-finger regions. Interacts with BBIP1, CBFA2T3, CYLD, DDIT3/CHOP, ZMYND15, F-actin and HDAC11. Interacts with RIPOR2; this interaction occurs during early myogenic differentiation and prevents HDAC6 to deacetylate tubulin. Interacts with AURKA; AURKA-mediated phosphorylation of HDAC6 promotes deacetylation of alpha-tubulin. Interacts with DYSF; this interaction occurs during early myogenic differentiation. Interacts with TPPP; inhibiting the tubulin deacetylase activity of HDAC6. Interacts with DYNLL1. Interacts with ATP13A2; the interaction results in recruitment of HDAC6 to lysosomes to promote CTTN deacetylation. Interacts with CCDC141 (via the N-terminal region); inhibiting the deacetylase activity of HDAC6. Interacts with IPO7; the interaction facilitates HDAC6 nuclear translocation in dental papilla cells. Requires Zn(2+) as cofactor. Post-translationally, phosphorylated by AURKA; phosphorylation increases HDAC6-mediated deacetylation of alpha-tubulin and subsequent disassembly of cilia. Ubiquitinated. Its polyubiquitination however does not lead to its degradation. In terms of processing, sumoylated in vitro.

Its subcellular location is the cytoplasm. The protein localises to the cytoskeleton. It localises to the nucleus. It is found in the perikaryon. The protein resides in the cell projection. Its subcellular location is the dendrite. The protein localises to the axon. It localises to the cilium. It is found in the microtubule organizing center. The protein resides in the centrosome. Its subcellular location is the cilium basal body. The enzyme catalyses N(6)-acetyl-L-lysyl-[protein] + H2O = L-lysyl-[protein] + acetate. It catalyses the reaction N(6)-acetyl-L-lysyl-[alpha-tubulin] + H2O = L-lysyl-[alpha-tubulin] + acetate. Its pathway is protein modification; protein ubiquitination. Functionally, deacetylates a wide range of non-histone substrates. Plays a central role in microtubule-dependent cell motility by mediating deacetylation of tubulin. Required for cilia disassembly via deacetylation of alpha-tubulin. Alpha-tubulin deacetylation results in destabilization of dynamic microtubules. Promotes deacetylation of CTTN, leading to actin polymerization, promotion of autophagosome-lysosome fusion and completion of autophagy. Deacetylates SQSTM1. Deacetylates peroxiredoxins PRDX1 and PRDX2, decreasing their reducing activity. Deacetylates antiviral protein RIGI in the presence of viral mRNAs which is required for viral RNA detection by RIGI. Sequentially deacetylates and polyubiquitinates DNA mismatch repair protein MSH2 which leads to MSH2 degradation, reducing cellular sensitivity to DNA-damaging agents and decreasing cellular DNA mismatch repair activities. Deacetylates DNA mismatch repair protein MLH1 which prevents recruitment of the MutL alpha complex (formed by the MLH1-PMS2 heterodimer) to the MutS alpha complex (formed by the MSH2-MSH6 heterodimer), leading to tolerance of DNA damage. Deacetylates RHOT1/MIRO1 which blocks mitochondrial transport and mediates axon growth inhibition. Deacetylates transcription factor SP1 which leads to increased expression of ENG, positively regulating angiogenesis. Deacetylates KHDRBS1/SAM68 which regulates alternative splicing by inhibiting the inclusion of CD44 alternate exons. Promotes odontoblast differentiation following IPO7-mediated nuclear import and subsequent repression of RUNX2 expression. In addition to its protein deacetylase activity, plays a key role in the degradation of misfolded proteins: when misfolded proteins are too abundant to be degraded by the chaperone refolding system and the ubiquitin-proteasome, mediates the transport of misfolded proteins to a cytoplasmic juxtanuclear structure called aggresome. Probably acts as an adapter that recognizes polyubiquitinated misfolded proteins and targets them to the aggresome, facilitating their clearance by autophagy. In Rattus norvegicus (Rat), this protein is Protein deacetylase HDAC6.